We begin with the raw amino-acid sequence, 180 residues long: Large ribosomal subunit protein uL16 (180 aa).

The protein belongs to the universal ribosomal protein uL16 family.

The sequence is that of Large ribosomal subunit protein uL16 from Hyperthermus butylicus (strain DSM 5456 / JCM 9403 / PLM1-5).